Here is a 248-residue protein sequence, read N- to C-terminus: Aquaporin Z (248 aa).

The next 2 membrane-spanning stretches (helical) occupy residues 11–31 (FIGT…AAAF) and 36–56 (IGFA…AFAI). Residues 65–67 (NPA) carry the NPA 1 motif. 3 helical membrane passes run 87–107 (IAAQ…IAGG), 132–152 (LLAC…IILG), and 161–181 (GFAP…SIPV). The short motif at 187-189 (NPA) is the NPA 2 element. Residues 203–223 (IAELWLFWLAPIVGAALAGLF) traverse the membrane as a helical segment.

The protein belongs to the MIP/aquaporin (TC 1.A.8) family. As to quaternary structure, homotetramer.

The protein resides in the cell inner membrane. The catalysed reaction is H2O(in) = H2O(out). Channel that permits osmotically driven movement of water in both directions. It is involved in the osmoregulation and in the maintenance of cell turgor during volume expansion in rapidly growing cells. It mediates rapid entry or exit of water in response to abrupt changes in osmolarity. This Gloeobacter violaceus (strain ATCC 29082 / PCC 7421) protein is Aquaporin Z.